Consider the following 240-residue polypeptide: LOB domain-containing protein 39 (240 aa).

The LOB domain occupies 1-107; it reads MSCNGCRVLR…VETVLRGGTL (107 aa). The tract at residues 200 to 233 is disordered; sequence GDRPGSPSEESVTTSCWENGMRGDNKQKRNKGEK. The span at 207 to 216 shows a compositional bias: polar residues; that stretch reads SEESVTTSCW.

The protein belongs to the LOB domain-containing protein family. In terms of tissue distribution, expressed in young shoots, roots, stems, leaves and flowers.

This is LOB domain-containing protein 39 (LBD39) from Arabidopsis thaliana (Mouse-ear cress).